The primary structure comprises 92 residues: Small ribosomal subunit protein uS19c (92 aa).

It belongs to the universal ribosomal protein uS19 family.

It localises to the plastid. The protein resides in the chloroplast. Its function is as follows. Protein S19 forms a complex with S13 that binds strongly to the 16S ribosomal RNA. This chain is Small ribosomal subunit protein uS19c, found in Huperzia lucidula (Shining clubmoss).